Reading from the N-terminus, the 572-residue chain is Solute carrier family 22 member 16 (572 aa).

The chain crosses the membrane as a helical span at residues Ile-21–Ser-41. The N-linked (GlcNAc...) asparagine glycan is linked to Asn-57. The next 5 helical transmembrane spans lie at Leu-156 to Ser-176, Leu-183 to Phe-203, Phe-208 to Val-228, Ile-244 to Val-264, and Trp-268 to Leu-288. N-linked (GlcNAc...) asparagine glycosylation is present at Asn-315. A run of 6 helical transmembrane segments spans residues Thr-359 to Asn-379, Leu-389 to Met-409, Asn-416 to Pro-436, Val-441 to Ile-461, Leu-476 to Ile-496, and Ile-503 to Leu-523. Asn-559 carries N-linked (GlcNAc...) asparagine glycosylation.

Belongs to the major facilitator (TC 2.A.1) superfamily. Organic cation transporter (TC 2.A.1.19) family.

It is found in the cell membrane. It catalyses the reaction (R)-carnitine(in) = (R)-carnitine(out). It carries out the reaction spermidine(in) = spermidine(out). In terms of biological role, facilitative organic cation transporter that mediates the transport of carnitine as well as the polyamine spermidine. Mediates the partially Na(+)-dependent bidirectional transport of carnitine. May mediate L-carnitine secretion from testis epididymal epithelium into the lumen which is involved in the maturation of spermatozoa. The protein is Solute carrier family 22 member 16 (SLC22A16) of Bos taurus (Bovine).